The sequence spans 156 residues: ADP-ribosylation factor-like protein 2-binding protein (156 aa).

The protein belongs to the ARL2BP family.

The protein resides in the cytoplasm. The protein localises to the mitochondrion intermembrane space. Its subcellular location is the cytoskeleton. It localises to the microtubule organizing center. It is found in the centrosome. The protein resides in the nucleus. The protein localises to the spindle. Its subcellular location is the cilium basal body. Functionally, plays a role as an effector of the ADP-ribosylation factor-like protein 2, ARL2. The sequence is that of ADP-ribosylation factor-like protein 2-binding protein (arl2bp) from Xenopus laevis (African clawed frog).